We begin with the raw amino-acid sequence, 67 residues long: MFTLKKSLLLIFFLGTINLSLCEEERNADEEERRDDLEERDVEVEKRLLSLALAALPKLFCLIFKKC.

Positions 1 to 22 (MFTLKKSLLLIFFLGTINLSLC) are cleaved as a signal peptide. A propeptide spanning residues 23–45 (EEERNADEEERRDDLEERDVEVE) is cleaved from the precursor. Residues cysteine 61 and cysteine 67 are joined by a disulfide bond.

Belongs to the frog skin active peptide (FSAP) family. Brevinin subfamily. Expressed by the skin glands.

It is found in the secreted. In terms of biological role, antimicrobial peptide. Has low activity against the Gram-positive bacterium S.aureus (MIC=12.5 uM) and the Gram-negative bacterium E.coli (MIC=25 uM). Has weak hemolytic activity against human erythrocytes. This Rana dybowskii (Dybovsky's frog) protein is Brevinin-1CDYa.